Reading from the N-terminus, the 382-residue chain is Glycerate kinase (382 aa).

This sequence belongs to the glycerate kinase type-1 family.

The catalysed reaction is (R)-glycerate + ATP = (2R)-3-phosphoglycerate + ADP + H(+). The protein is Glycerate kinase (glxK) of Bacillus subtilis (strain 168).